The chain runs to 278 residues: Large ribosomal subunit protein uL2 (278 aa).

2 disordered regions span residues P29–G53 and R221–R278. Over residues I269–R278 the composition is skewed to basic residues.

The protein belongs to the universal ribosomal protein uL2 family. Part of the 50S ribosomal subunit. Forms a bridge to the 30S subunit in the 70S ribosome.

Its function is as follows. One of the primary rRNA binding proteins. Required for association of the 30S and 50S subunits to form the 70S ribosome, for tRNA binding and peptide bond formation. It has been suggested to have peptidyltransferase activity; this is somewhat controversial. Makes several contacts with the 16S rRNA in the 70S ribosome. The chain is Large ribosomal subunit protein uL2 from Erythrobacter litoralis (strain HTCC2594).